We begin with the raw amino-acid sequence, 431 residues long: Dihydroorotase (431 aa).

His55 and His57 together coordinate Zn(2+). Substrate is bound by residues 57–59 and Asn89; that span reads HFR. The Zn(2+) site is built by Lys139, His169, His223, and Asp290. Lys139 bears the N6-carboxylysine mark. The active site involves Asp290. Substrate contacts are provided by residues His294 and 308–309; that span reads PG.

Belongs to the metallo-dependent hydrolases superfamily. DHOase family. Class I DHOase subfamily. It depends on Zn(2+) as a cofactor.

It catalyses the reaction (S)-dihydroorotate + H2O = N-carbamoyl-L-aspartate + H(+). It participates in pyrimidine metabolism; UMP biosynthesis via de novo pathway; (S)-dihydroorotate from bicarbonate: step 3/3. Functionally, catalyzes the reversible cyclization of carbamoyl aspartate to dihydroorotate. This Methanothermobacter thermautotrophicus (strain ATCC 29096 / DSM 1053 / JCM 10044 / NBRC 100330 / Delta H) (Methanobacterium thermoautotrophicum) protein is Dihydroorotase.